Reading from the N-terminus, the 991-residue chain is MQPSDRMRALPRRARVMIMVTVALIALLVIGPRLVVGYTDWLWFGEVGYRRVWGTVLVTRLILFTAVTLLVGAVIFAAVVWAYRSRPLFAASGANTAKDPVERYREVVSRRPRSFTVGIALLLALPFGLHAQASWETVQLFLHGGAFGTVDAEFGYDIGFYVFDLPFYRLILAWLFIAVFLALLIGLGTHYLFGGIRLAPSKDHVIEVSRPARVQLAVFAGTFIALKAASYWLDRYSLLWSGRKEPTFTGAGYTDINAVLPARLIMVAIAVLCAVAFFAAIAVRDLRIPAMATALLVLSAILVGGIYPALIEQFSVRPNAADRESPYIERNIAATRQAYGIGPDRVDYLDYPGVGTRSPRDIPADVTTIANARLLDPTVLSRTFTQQQQLKNFYGFPEHLNIDRYTIDGQLTDYIVAARELSPNSLSGNQTQWINRHTVYTHGNGFIAAPANRVNAAVRDVAGQSASSDSGYPIYAVSDIASQVGGDQVIPVEQPRIYFGEVIAQADPDYAIVGGPEGVPPREYDTDTAQYTYTGTGGVPVGSWVNRLAFAARYGERNILFSGAIGSESKIIFNRDPAARVEHVAPWLTTDSNPYPAVVGGRIVWIVDGYTTAAHYPYSQVGSLAEPVVNDTGRTLAREEVSYVRNSVKATVDAYDGTVTLYQVDENDPVLGAWMKVFPGTVQPPTAIPTELRAHFRYPEDLFRLQRDLLAKYHVDDPREFFTTNAFWSVPSDPTADTGGEQPPYYVLVGDAGTAAPSFRLTSAMVGFNREFLSAYLSAHSDPENYGRIDILRLPTDTQTQGPRQTQNSMISDTRVASERTLLERSNRIYYANLLTLPIADGGILYVEPVFTERLTSTPNSSTFPQLARVLVSYREPGTGGVRIGYAPTLAEALDQVFGTGTGAVATAPGGDATTPPPTGGQPPAPPPPGAPPAPPPATSDQLTAAVLELNNALANLREAQHTGDFTTYGAALDRLQQAIDTYLAAGGTPH.

The next 7 membrane-spanning stretches (helical) occupy residues 16–36, 61–81, 115–135, 170–190, 214–234, 263–283, and 291–311; these read VMIM…RLVV, LILF…AVVW, FTVG…QASW, LILA…LGTH, VQLA…YWLD, RLIM…AIAV, and MATA…PALI. Positions 902–940 are disordered; it reads TGAVATAPGGDATTPPPTGGQPPAPPPPGAPPAPPPATS. A compositionally biased stretch (low complexity) spans 903–914; it reads GAVATAPGGDAT. Residues 915 to 938 show a composition bias toward pro residues; that stretch reads TPPPTGGQPPAPPPPGAPPAPPPA.

Belongs to the UPF0182 family.

It localises to the cell membrane. This chain is UPF0182 protein RHA1_ro08670, found in Rhodococcus jostii (strain RHA1).